Consider the following 432-residue polypeptide: Enolase (432 aa).

Q166 is a binding site for (2R)-2-phosphoglycerate. The active-site Proton donor is E210. Residues D247, E288, and D315 each coordinate Mg(2+). The (2R)-2-phosphoglycerate site is built by K340, R369, S370, and K391. The active-site Proton acceptor is the K340.

Belongs to the enolase family. The cofactor is Mg(2+).

The protein localises to the cytoplasm. It localises to the secreted. The protein resides in the cell surface. The catalysed reaction is (2R)-2-phosphoglycerate = phosphoenolpyruvate + H2O. It functions in the pathway carbohydrate degradation; glycolysis; pyruvate from D-glyceraldehyde 3-phosphate: step 4/5. In terms of biological role, catalyzes the reversible conversion of 2-phosphoglycerate (2-PG) into phosphoenolpyruvate (PEP). It is essential for the degradation of carbohydrates via glycolysis. The polypeptide is Enolase (Aeropyrum pernix (strain ATCC 700893 / DSM 11879 / JCM 9820 / NBRC 100138 / K1)).